A 712-amino-acid chain; its full sequence is Ribosome-releasing factor 2, mitochondrial (712 aa).

A mitochondrion-targeting transit peptide spans 1-29 (MLRCAWQNGPRQSNRWLRHLSNQIWKRSY). Residues 31–310 (SKIRNIGILA…AVNSYLPAPE (280 aa)) form the tr-type G domain. GTP contacts are provided by residues 40–47 (AHIDAGKT), 104–108 (DTPGH), and 158–161 (NKMD).

The protein belongs to the TRAFAC class translation factor GTPase superfamily. Classic translation factor GTPase family. EF-G/EF-2 subfamily.

Its subcellular location is the mitochondrion. Mitochondrial GTPase that mediates the disassembly of ribosomes from messenger RNA at the termination of mitochondrial protein biosynthesis. Not involved in the GTP-dependent ribosomal translocation step during translation elongation. This Drosophila yakuba (Fruit fly) protein is Ribosome-releasing factor 2, mitochondrial.